A 141-amino-acid polypeptide reads, in one-letter code: Nucleoside diphosphate kinase (141 aa).

ATP contacts are provided by Lys-9, Phe-57, Arg-85, Thr-91, Arg-102, and Asn-112. His-115 acts as the Pros-phosphohistidine intermediate in catalysis.

This sequence belongs to the NDK family. In terms of assembly, homotetramer. Mg(2+) is required as a cofactor.

The protein localises to the cytoplasm. It carries out the reaction a 2'-deoxyribonucleoside 5'-diphosphate + ATP = a 2'-deoxyribonucleoside 5'-triphosphate + ADP. The enzyme catalyses a ribonucleoside 5'-diphosphate + ATP = a ribonucleoside 5'-triphosphate + ADP. Major role in the synthesis of nucleoside triphosphates other than ATP. The ATP gamma phosphate is transferred to the NDP beta phosphate via a ping-pong mechanism, using a phosphorylated active-site intermediate. The chain is Nucleoside diphosphate kinase from Chlamydia trachomatis serovar D (strain ATCC VR-885 / DSM 19411 / UW-3/Cx).